Reading from the N-terminus, the 263-residue chain is Putative S-adenosyl-L-methionine-dependent methyltransferase Mjls_0079 (263 aa).

Residues aspartate 121 and 150 to 151 (ES) contribute to the S-adenosyl-L-methionine site.

The protein belongs to the UPF0677 family.

Exhibits S-adenosyl-L-methionine-dependent methyltransferase activity. The sequence is that of Putative S-adenosyl-L-methionine-dependent methyltransferase Mjls_0079 from Mycobacterium sp. (strain JLS).